Here is a 70-residue protein sequence, read N- to C-terminus: DNA-directed RNA polymerase subunit epsilon (70 aa).

The protein belongs to the RNA polymerase subunit epsilon family. RNAP is composed of a core of 2 alpha, a beta and a beta' subunit. The core is associated with a delta subunit, and at least one of epsilon or omega. When a sigma factor is associated with the core the holoenzyme is formed, which can initiate transcription.

The catalysed reaction is RNA(n) + a ribonucleoside 5'-triphosphate = RNA(n+1) + diphosphate. A non-essential component of RNA polymerase (RNAP). In Latilactobacillus sakei subsp. sakei (strain 23K) (Lactobacillus sakei subsp. sakei), this protein is DNA-directed RNA polymerase subunit epsilon.